The following is a 39-amino-acid chain: Photosystem II reaction center protein J (39 aa).

A helical membrane pass occupies residues 7-27; sequence IPLWIVAVVAGLGVITVVGLF.

Belongs to the PsbJ family. As to quaternary structure, PSII is composed of 1 copy each of membrane proteins PsbA, PsbB, PsbC, PsbD, PsbE, PsbF, PsbH, PsbI, PsbJ, PsbK, PsbL, PsbM, PsbT, PsbX, PsbY, PsbZ, Psb30/Ycf12, peripheral proteins PsbO, CyanoQ (PsbQ), PsbU, PsbV and a large number of cofactors. It forms dimeric complexes.

It localises to the cellular thylakoid membrane. One of the components of the core complex of photosystem II (PSII). PSII is a light-driven water:plastoquinone oxidoreductase that uses light energy to abstract electrons from H(2)O, generating O(2) and a proton gradient subsequently used for ATP formation. It consists of a core antenna complex that captures photons, and an electron transfer chain that converts photonic excitation into a charge separation. The polypeptide is Photosystem II reaction center protein J (Synechococcus sp. (strain JA-2-3B'a(2-13)) (Cyanobacteria bacterium Yellowstone B-Prime)).